The following is a 364-amino-acid chain: DNA polymerase IV (364 aa).

The region spanning 8–189 (IIHIDMDCYF…LPLTKIPGVG (182 aa)) is the UmuC domain. Residues D12 and D107 each contribute to the Mg(2+) site. E108 is an active-site residue.

Belongs to the DNA polymerase type-Y family. In terms of assembly, monomer. The cofactor is Mg(2+).

The protein localises to the cytoplasm. It catalyses the reaction DNA(n) + a 2'-deoxyribonucleoside 5'-triphosphate = DNA(n+1) + diphosphate. Functionally, poorly processive, error-prone DNA polymerase involved in untargeted mutagenesis. Copies undamaged DNA at stalled replication forks, which arise in vivo from mismatched or misaligned primer ends. These misaligned primers can be extended by PolIV. Exhibits no 3'-5' exonuclease (proofreading) activity. May be involved in translesional synthesis, in conjunction with the beta clamp from PolIII. This is DNA polymerase IV from Shewanella woodyi (strain ATCC 51908 / MS32).